A 271-amino-acid chain; its full sequence is Phosphonoacetaldehyde hydrolase (271 aa).

Aspartate 12 (nucleophile) is an active-site residue. The Mg(2+) site is built by aspartate 12 and alanine 14. Catalysis depends on lysine 54, which acts as the Schiff-base intermediate with substrate. Aspartate 188 is a binding site for Mg(2+).

Belongs to the HAD-like hydrolase superfamily. PhnX family. Homodimer. Mg(2+) serves as cofactor.

It carries out the reaction phosphonoacetaldehyde + H2O = acetaldehyde + phosphate + H(+). Functionally, involved in phosphonate degradation. This Vibrio vulnificus (strain CMCP6) protein is Phosphonoacetaldehyde hydrolase.